Reading from the N-terminus, the 243-residue chain is 1-(5-phosphoribosyl)-5-[(5-phosphoribosylamino)methylideneamino] imidazole-4-carboxamide isomerase (243 aa).

The active-site Proton acceptor is Asp-8. Residue Asp-129 is the Proton donor of the active site.

Belongs to the HisA/HisF family.

Its subcellular location is the cytoplasm. It carries out the reaction 1-(5-phospho-beta-D-ribosyl)-5-[(5-phospho-beta-D-ribosylamino)methylideneamino]imidazole-4-carboxamide = 5-[(5-phospho-1-deoxy-D-ribulos-1-ylimino)methylamino]-1-(5-phospho-beta-D-ribosyl)imidazole-4-carboxamide. The protein operates within amino-acid biosynthesis; L-histidine biosynthesis; L-histidine from 5-phospho-alpha-D-ribose 1-diphosphate: step 4/9. The polypeptide is 1-(5-phosphoribosyl)-5-[(5-phosphoribosylamino)methylideneamino] imidazole-4-carboxamide isomerase (Carboxydothermus hydrogenoformans (strain ATCC BAA-161 / DSM 6008 / Z-2901)).